Consider the following 475-residue polypeptide: MHFETVIGLEVHVELKTDSKMFSPSPAHFGAEPNSNTNVIDLAYPGVLPVVNRRAVDWAMRASMALNMDIATNSKFDRKNYFYPDNPKAYQISQFDQPIGENGYIDIEVDGETKRIGITRLHMEEDAGKSTHKDGYSLVDLNRQGTPLIEIVSEPDIRSPKEAYAYLEKLRSIIQYTGVSDCKMEEGSLRCDANISLRPYGQKEFGTKTELKNLNSFNYVKKGLEYEEKRQEEELLNGGEIGQETRRFDESTGKTILMRVKEGSDDYRYFLEPDIVPLYVDEDWKARVRETIPELPDERKAKYVNDLGLPEYDAHVLTLTKEMSDFFEGAIDHGADVKLTSNWLMGGVNEYLNKNQVELKDTQLTPENLAGMIKLIEDGTMSSKIAKKVFPELAENGGDAKQIMEDKGLVQISDEATLLKFVTDALDNNPQSIEDYKNGKGKAMGFLVGQIMKASKGQANPQKVNSLLKQELDNR.

Belongs to the GatB/GatE family. GatB subfamily. In terms of assembly, heterotrimer of A, B and C subunits.

It carries out the reaction L-glutamyl-tRNA(Gln) + L-glutamine + ATP + H2O = L-glutaminyl-tRNA(Gln) + L-glutamate + ADP + phosphate + H(+). The enzyme catalyses L-aspartyl-tRNA(Asn) + L-glutamine + ATP + H2O = L-asparaginyl-tRNA(Asn) + L-glutamate + ADP + phosphate + 2 H(+). Its function is as follows. Allows the formation of correctly charged Asn-tRNA(Asn) or Gln-tRNA(Gln) through the transamidation of misacylated Asp-tRNA(Asn) or Glu-tRNA(Gln) in organisms which lack either or both of asparaginyl-tRNA or glutaminyl-tRNA synthetases. The reaction takes place in the presence of glutamine and ATP through an activated phospho-Asp-tRNA(Asn) or phospho-Glu-tRNA(Gln). The sequence is that of Aspartyl/glutamyl-tRNA(Asn/Gln) amidotransferase subunit B (gatB) from Staphylococcus sp.